A 102-amino-acid chain; its full sequence is Small ribosomal subunit protein eS24 (102 aa).

Belongs to the eukaryotic ribosomal protein eS24 family.

This Methanococcus aeolicus (strain ATCC BAA-1280 / DSM 17508 / OCM 812 / Nankai-3) protein is Small ribosomal subunit protein eS24.